Consider the following 190-residue polypeptide: MQKKFEDCVKTMLEIIGENPNREGLIKTPNRVFKAYEFLTSGYTQNVKEILNDALFESSNNEMVLVRDIEFYSLCEHHLLPFFGRAHVAYIPNKKVVGLSKIPRLVEVFARRLQIQEQLTEQIAQALMENADAKGVGVIIEARHMCVEMRGVQKANSTTTTSALRGIFLKNEKIREEFFSLINSAKQVRF.

Zn(2+)-binding residues include Cys75, His78, and Cys146.

It belongs to the GTP cyclohydrolase I family. As to quaternary structure, toroid-shaped homodecamer, composed of two pentamers of five dimers.

It carries out the reaction GTP + H2O = 7,8-dihydroneopterin 3'-triphosphate + formate + H(+). It participates in cofactor biosynthesis; 7,8-dihydroneopterin triphosphate biosynthesis; 7,8-dihydroneopterin triphosphate from GTP: step 1/1. This chain is GTP cyclohydrolase 1, found in Campylobacter jejuni subsp. doylei (strain ATCC BAA-1458 / RM4099 / 269.97).